The chain runs to 710 residues: Exocyst complex component 5 (710 aa).

Residues Asp44–Phe96 adopt a coiled-coil conformation.

This sequence belongs to the SEC10 family. In terms of assembly, the exocyst complex is composed of Sec3/Exoc1, Sec5/Exoc2, Sec6/Exoc3, Sec8/Exoc4, Sec10/Exoc5, Sec15/Exoc6, Exo70/Exoc7 and Exo84/Exoc8.

Functionally, component of the exocyst complex involved in the docking of exocytic vesicles with fusion sites on the plasma membrane. The polypeptide is Exocyst complex component 5 (Drosophila melanogaster (Fruit fly)).